We begin with the raw amino-acid sequence, 321 residues long: Olfactory receptor 52N2 (321 aa).

The Extracellular portion of the chain corresponds to 1-27; it reads MSGDNSSSLTPGFFILNGVPGLEATHI. An N-linked (GlcNAc...) asparagine glycan is attached at asparagine 5. Residues 28-48 traverse the membrane as a helical segment; it reads WISLPFCFMYIIAVVGNCGLI. Residues 49 to 56 lie on the Cytoplasmic side of the membrane; sequence CLISHEEA. A helical membrane pass occupies residues 57 to 77; the sequence is LHRPMYYFLALLSFTDVTLCT. Topologically, residues 78-101 are extracellular; that stretch reads TMVPNMLCIFWFNLKEIDFNACLA. Cysteine 99 and cysteine 191 are oxidised to a cystine. A helical membrane pass occupies residues 102–122; sequence QMFFVHMLTGMESGVLMLMAL. The Cytoplasmic segment spans residues 123–141; the sequence is DRYVAICYPLRYATILTNP. A helical transmembrane segment spans residues 142 to 162; that stretch reads VIAKAGLATFLRNVMLIIPFT. Over 163-198 the chain is Extracellular; it reads LLTKRLPYCRGNFIPHTYCDHMSVAKVSCGNFKVNA. Residues 199-219 form a helical membrane-spanning segment; the sequence is IYGLMVALLIGVFDICCISVS. At 220–239 the chain is on the cytoplasmic side; sequence YTMILQAVMSLSSADARHKA. A helical membrane pass occupies residues 240-260; sequence FSTCTSHMCSIVITYVAAFFT. The Extracellular segment spans residues 261-276; the sequence is FFTHRFVGHNIPNHIH. Residues 277 to 297 form a helical membrane-spanning segment; that stretch reads IIVANLYLLLPPTMNPIVYGV. The Cytoplasmic segment spans residues 298–321; it reads KTKQIQEGVIKFLLGDKVSFTYDK.

It belongs to the G-protein coupled receptor 1 family.

The protein resides in the cell membrane. Functionally, odorant receptor. The protein is Olfactory receptor 52N2 (OR52N2) of Homo sapiens (Human).